Here is a 319-residue protein sequence, read N- to C-terminus: Olfactory receptor 2S2 (319 aa).

Residues 1 to 26 (MEKANETSPVMGFVLLRLSAHPELEK) lie on the Extracellular side of the membrane. The N-linked (GlcNAc...) asparagine glycan is linked to asparagine 5. The chain crosses the membrane as a helical span at residues 27–50 (TFFVLILLMYLVILLGNGVLILVT). Topologically, residues 51–58 (ILDSRLHT) are cytoplasmic. A helical membrane pass occupies residues 59-80 (PMYFFLGNLSFLDICFTTSSVP). Residues 81–101 (LVLDSFLTPQETISFSACAVQ) are Extracellular-facing. A disulfide bridge connects residues cysteine 98 and cysteine 190. The chain crosses the membrane as a helical span at residues 102–121 (MALSFAMAGTECLLLSMMAF). Topologically, residues 122-140 (DRYVAICNPLRYSVIMSKA) are cytoplasmic. A helical transmembrane segment spans residues 141-159 (AYMPMAASSWAIGGAASVV). Residues 160–196 (HTSLAIQLPFCGDNVINHFTCEILAVLKLACADISIN) lie on the Extracellular side of the membrane. A helical transmembrane segment spans residues 197–220 (VISMEVTNVIFLGVPVLFISFSYV). The Cytoplasmic segment spans residues 221-237 (FIITTILRIPSAEGRKK). A helical transmembrane segment spans residues 238–260 (VFSTCSAHLTVVIVFYGTLFFMY). The Extracellular portion of the chain corresponds to 261–279 (GKPKSKDSMGADKEDLSDK). A helical membrane pass occupies residues 280 to 299 (LIPLFYGVVTPMLNPIIYSL). At 300-319 (RNKDVKAAVRRLLRPKGFTQ) the chain is on the cytoplasmic side.

Belongs to the G-protein coupled receptor 1 family.

The protein resides in the cell membrane. Functionally, odorant receptor. This is Olfactory receptor 2S2 (OR2S2) from Homo sapiens (Human).